A 114-amino-acid polypeptide reads, in one-letter code: uncharacterized protein (114 aa).

A helical membrane pass occupies residues 13–30 (LYISAAGIASIYVVKTIV).

The protein resides in the mitochondrion outer membrane. This is an uncharacterized protein from Saccharomyces cerevisiae (strain ATCC 204508 / S288c) (Baker's yeast).